The following is a 444-amino-acid chain: Chromosomal replication initiator protein DnaA (444 aa).

The domain I, interacts with DnaA modulators stretch occupies residues 1–66; the sequence is MKSEIIESLK…SKTLRELFGK (66 aa). The segment at 66–100 is domain II; the sequence is KPMDFRIEHASAKTEEKLDSNEDEPLVKKRPLILT. Residues 101–317 are domain III, AAA+ region; sequence PLNPILTFEN…GALVKLIMYQ (217 aa). Residues Gly-144, Gly-146, Lys-147, and Thr-148 each coordinate ATP. The segment at 318-444 is domain IV, binds dsDNA; that stretch reads QISGEKVDLQ…VTGQILDQSV (127 aa).

This sequence belongs to the DnaA family. In terms of assembly, oligomerizes as a right-handed, spiral filament on DNA at oriC.

The protein localises to the cytoplasm. Its function is as follows. Plays an essential role in the initiation and regulation of chromosomal replication. ATP-DnaA binds to the origin of replication (oriC) to initiate formation of the DNA replication initiation complex once per cell cycle. Binds the DnaA box (a 9 base pair repeat at the origin) and separates the double-stranded (ds)DNA. Forms a right-handed helical filament on oriC DNA; dsDNA binds to the exterior of the filament while single-stranded (ss)DNA is stabiized in the filament's interior. The ATP-DnaA-oriC complex binds and stabilizes one strand of the AT-rich DNA unwinding element (DUE), permitting loading of DNA polymerase. After initiation quickly degrades to an ADP-DnaA complex that is not apt for DNA replication. Binds acidic phospholipids. The protein is Chromosomal replication initiator protein DnaA of Pseudothermotoga lettingae (strain ATCC BAA-301 / DSM 14385 / NBRC 107922 / TMO) (Thermotoga lettingae).